A 1052-amino-acid polypeptide reads, in one-letter code: Germline survival defective-1 (1052 aa).

A signal peptide spans 1-25 (MRCLISYLFHSFLIFLKFIRSDVTA). 5 disordered regions span residues 41-320 (LMKS…DPKN), 478-543 (VNGI…QSVP), 667-689 (PSSQ…EEFE), 933-965 (KQTL…NSYA), and 1033-1052 (SNNT…NSNF). Residues 67–145 (ATATAAATTQ…SSTSSTSQQT (79 aa)) show a composition bias toward low complexity. Positions 163 to 172 (TSNTANSQSG) are enriched in polar residues. Basic and acidic residues predominate over residues 178–190 (TNKDRPKEKEKNT). A compositionally biased stretch (low complexity) spans 244–279 (NAKSSGFLSNSSLSSAGQISASSAPPVSTTPTAIPI). The segment covering 305–320 (KRDEEPMPYKSTDPKN) has biased composition (basic and acidic residues). Positions 424 to 732 (QHPPGLPPLL…QIEKNDNLFS (309 aa)) are gld-4 binding. Positions 480 to 514 (GISNNIPSDRQQLDSKPNTARGSSGNINQSNTTSP) are enriched in polar residues. Residues 674 to 689 (DENDTDSDHESEEEFE) are compositionally biased toward acidic residues. The segment at 892–1052 (PIELPVNMQP…SGGGNQNSNF (161 aa)) is gld-3 binding. The segment covering 950-963 (EGSQQNGGTSSSNS) has biased composition (low complexity). Gly residues predominate over residues 1038 to 1052 (GVNGNSGGGNQNSNF).

Isoform C interacts (via C-terminus) with gld-3 isoform A (via C-terminus) in an RNA-independent manner. Isoform C interacts with gld-4. Expressed in the germline (at protein level). In the early embryo is expressed in all cells, then becomes gradually restricted to the germ cell lineage and enriches in P granules (at protein level). In adult hermaphrodites, is expressed in the mitotic region, accumulates during early stages of meiotic prophase I and is slightly less abundant in maturing oocytes (at protein level).

The protein resides in the cytoplasm. Its subcellular location is the cytoplasmic granule. In terms of biological role, required maternally for germline survival by forming a maternal complex with gld-3. During hermaphrodite development forms a complex with gld-3 which promotes the sperm/oocyte switch freeing the translational repressor fbf to turn off sperm promoting factors. Required for proper oocyte differentiation and oogenic meiotic arrest. Stimulates the enzymatic activity of gld-4 and together they prevent gld-1 mRNA degradation. The polypeptide is Germline survival defective-1 (Caenorhabditis elegans).